The chain runs to 303 residues: Ribonuclease Z (303 aa).

The Zn(2+) site is built by His61, His63, Asp65, His66, His138, Asp206, and His265. Residue Asp65 is the Proton acceptor of the active site.

This sequence belongs to the RNase Z family. As to quaternary structure, homodimer. It depends on Zn(2+) as a cofactor.

The enzyme catalyses Endonucleolytic cleavage of RNA, removing extra 3' nucleotides from tRNA precursor, generating 3' termini of tRNAs. A 3'-hydroxy group is left at the tRNA terminus and a 5'-phosphoryl group is left at the trailer molecule.. Zinc phosphodiesterase, which displays some tRNA 3'-processing endonuclease activity. Probably involved in tRNA maturation, by removing a 3'-trailer from precursor tRNA. The protein is Ribonuclease Z of Agathobacter rectalis (strain ATCC 33656 / DSM 3377 / JCM 17463 / KCTC 5835 / VPI 0990) (Eubacterium rectale).